Here is a 1053-residue protein sequence, read N- to C-terminus: MNFSVLPPEINSALIFAGAGPEPMAAAATAWDGLAMELASAAASFGSVTSGLVGGAWQGASSSAMAAAAAPYAAWLAAAAVQAEQTAAQAAAMIAEFEAVKTAVVQPMLVAANRADLVSLVMSNLFGQNAPAIAAIEATYEQMWAADVSAMSAYHAGASAIASALSPFSKPLQNLAGLPAWLASGAPAAAMTAAAGIPALAGGPTAINLGIANVGGGNVGNANNGLANIGNANLGNYNFGSGNFGNSNIGSASLGNNNIGFGNLGSNNVGVGNLGNLNTGFANTGLGNFGFGNTGNNNIGIGLTGNNQIGIGGLNSGTGNFGLFNSGSGNVGFFNSGNGNFGIGNSGNFNTGGWNSGHGNTGFFNAGSFNTGMLDVGNANTGSLNTGSYNMGDFNPGSSNTGTFNTGNANTGFLNAGNINTGVFNIGHMNNGLFNTGDMNNGVFYRGVGQGSLQFSITTPDLTLPPLQIPGISVPAFSLPAITLPSLNIPAATTPANITVGAFSLPGLTLPSLNIPAATTPANITVGAFSLPGLTLPSLNIPAATTPANITVGAFSLPGLTLPSLNIPAATTPANITVGAFSLPGLTLPSLNIPAATTPANITVGAFSLPGLTLPSLNIPAATTPANITVSGFQLPPLSIPSVAIPPVTVPPITVGAFNLPPLQIPEVTIPQLTIPAGITIGGFSLPAIHTQPITVGQIGVGQFGLPSIGWDVFLSTPRITVPAFGIPFTLQFQTNVPALQPPGGGLSTFTNGALIFGEFDLPQLVVHPYTLTGPIVIGSFFLPAFNIPGIDVPAINVDGFTLPQITTPAITTPEFAIPPIGVGGFTLPQITTQEIITPELTINSIGVGGFTLPQITTPPITTPPLTIDPINLTGFTLPQITTPPITTPPLTIDPINLTGFTLPQITTPPITTPPLTIEPIGVGGFTTPPLTVPGIHLPSTTIGAFAIPGGPGYFNSSTAPSSGFFNSGAGGNSGFGNNGSGLSGWFNTNPAGLLGGSGYQNFGGLSSGFSNLGSGVSGFANRGILPFSVASVVSGFANIGTNLAGFFQGTTS.

Belongs to the mycobacterial PPE family.

This is an uncharacterized protein from Mycobacterium tuberculosis (strain ATCC 25618 / H37Rv).